The following is a 149-amino-acid chain: Nucleoside diphosphate kinase (149 aa).

K9, F57, R85, T91, R102, and N112 together coordinate ATP. Catalysis depends on H115, which acts as the Pros-phosphohistidine intermediate.

The protein belongs to the NDK family. In terms of assembly, homotetramer. The cofactor is Mg(2+).

It is found in the cytoplasm. The catalysed reaction is a 2'-deoxyribonucleoside 5'-diphosphate + ATP = a 2'-deoxyribonucleoside 5'-triphosphate + ADP. The enzyme catalyses a ribonucleoside 5'-diphosphate + ATP = a ribonucleoside 5'-triphosphate + ADP. In terms of biological role, major role in the synthesis of nucleoside triphosphates other than ATP. The ATP gamma phosphate is transferred to the NDP beta phosphate via a ping-pong mechanism, using a phosphorylated active-site intermediate. In Nostoc sp. (strain PCC 7120 / SAG 25.82 / UTEX 2576), this protein is Nucleoside diphosphate kinase.